The chain runs to 88 residues: MGIARILSAVLFLSVLFVVTFPTLLSADHHDGRIDTCRLPSDRGGCKASFERWYFNGTTCTKFVYGGYGGNDNRFPTEKACMKRCAKA.

The first 27 residues, 1 to 27 (MGIARILSAVLFLSVLFVVTFPTLLSA), serve as a signal peptide directing secretion. Residues 28–33 (DHHDGR) constitute a propeptide that is removed on maturation. Residues 37–85 (CRLPSDRGGCKASFERWYFNGTTCTKFVYGGYGGNDNRFPTEKACMKRC) form the BPTI/Kunitz inhibitor domain. 2 cysteine pairs are disulfide-bonded: Cys-37–Cys-85 and Cys-60–Cys-81.

Belongs to the venom Kunitz-type family. 01 (intermediate) subfamily. Expressed by the venom gland.

It localises to the secreted. Serine protease inhibitor that inhibits trypsin at a molar ratio of 1:1. The polypeptide is Kunitz-type U15-theraphotoxin-Hhn1n (Cyriopagopus hainanus (Chinese bird spider)).